Consider the following 252-residue polypeptide: Octanoyltransferase (252 aa).

The segment covering 1 to 21 (MPSAPAAPAAPAAPDAAASVA) has biased composition (low complexity). Positions 1–22 (MPSAPAAPAAPAAPDAAASVAP) are disordered. Positions 56–237 (PDTDDEIWVV…RLIAHLDGAT (182 aa)) constitute a BPL/LPL catalytic domain. Substrate is bound by residues 96 to 103 (RGGQITYH), 168 to 170 (ALG), and 181 to 183 (GLS). The active-site Acyl-thioester intermediate is the Cys199.

It belongs to the LipB family.

The protein resides in the cytoplasm. The enzyme catalyses octanoyl-[ACP] + L-lysyl-[protein] = N(6)-octanoyl-L-lysyl-[protein] + holo-[ACP] + H(+). The protein operates within protein modification; protein lipoylation via endogenous pathway; protein N(6)-(lipoyl)lysine from octanoyl-[acyl-carrier-protein]: step 1/2. Its function is as follows. Catalyzes the transfer of endogenously produced octanoic acid from octanoyl-acyl-carrier-protein onto the lipoyl domains of lipoate-dependent enzymes. Lipoyl-ACP can also act as a substrate although octanoyl-ACP is likely to be the physiological substrate. The chain is Octanoyltransferase from Burkholderia pseudomallei (strain 668).